We begin with the raw amino-acid sequence, 59 residues long: Large ribosomal subunit protein bL35 (59 aa).

The segment covering 17 to 43 (GQIKRKHAYTSHLAPHKSTKQKRHLRK) has biased composition (basic residues). A disordered region spans residues 17–47 (GQIKRKHAYTSHLAPHKSTKQKRHLRKQATV).

It belongs to the bacterial ribosomal protein bL35 family.

The sequence is that of Large ribosomal subunit protein bL35 from Mycoplasma genitalium (strain ATCC 33530 / DSM 19775 / NCTC 10195 / G37) (Mycoplasmoides genitalium).